Reading from the N-terminus, the 690-residue chain is Methionine--tRNA ligase 1 (690 aa).

The 'HIGH' region signature appears at 11–21 (PYANGHIHIGH). Positions 142, 145, 155, and 158 each coordinate Zn(2+). The 'KMSKS' region signature appears at 328–332 (KMSKS). K331 is an ATP binding site. The tRNA-binding domain occupies 590–690 (DFSKVDLRVA…SGAKPGMRVH (101 aa)).

It belongs to the class-I aminoacyl-tRNA synthetase family. MetG type 1 subfamily. As to quaternary structure, homodimer. It depends on Zn(2+) as a cofactor.

Its subcellular location is the cytoplasm. It catalyses the reaction tRNA(Met) + L-methionine + ATP = L-methionyl-tRNA(Met) + AMP + diphosphate. Its function is as follows. Is required not only for elongation of protein synthesis but also for the initiation of all mRNA translation through initiator tRNA(fMet) aminoacylation. The protein is Methionine--tRNA ligase 1 of Sorangium cellulosum (strain So ce56) (Polyangium cellulosum (strain So ce56)).